A 141-amino-acid polypeptide reads, in one-letter code: Large ribosomal subunit protein uL11 (141 aa).

This sequence belongs to the universal ribosomal protein uL11 family. Part of the ribosomal stalk of the 50S ribosomal subunit. Interacts with L10 and the large rRNA to form the base of the stalk. L10 forms an elongated spine to which L12 dimers bind in a sequential fashion forming a multimeric L10(L12)X complex. Post-translationally, one or more lysine residues are methylated.

In terms of biological role, forms part of the ribosomal stalk which helps the ribosome interact with GTP-bound translation factors. In Thermosipho africanus (strain TCF52B), this protein is Large ribosomal subunit protein uL11.